A 750-amino-acid chain; its full sequence is von Willebrand factor A domain-containing protein DDB_G0292188 (750 aa).

Residues 17-249 (EIKTVFNSDS…IKDDLLLDVV (233 aa)) form the VWFA domain. 2 stretches are compositionally biased toward low complexity: residues 586-595 (SINDNNNSFN) and 603-645 (PFFE…SSAS). A disordered region spans residues 586-657 (SINDNNNSFN…PPPSQMLNEQ (72 aa)).

The sequence is that of von Willebrand factor A domain-containing protein DDB_G0292188 from Dictyostelium discoideum (Social amoeba).